We begin with the raw amino-acid sequence, 261 residues long: [LysW]-aminoadipate/[LysW]-glutamate kinase (261 aa).

Residues 35 to 36 (GG), arginine 62, and asparagine 166 contribute to the substrate site.

The protein belongs to the acetylglutamate kinase family. LysZ subfamily.

The protein resides in the cytoplasm. The enzyme catalyses [amino-group carrier protein]-C-terminal-N-(1,4-dicarboxybutan-1-yl)-L-glutamine + ATP = [amino-group carrier protein]-C-terminal-N-(1-carboxy-5-phosphooxy-5-oxopentan-1-yl)-L-glutamine + ADP. It catalyses the reaction [amino-group carrier protein]-C-terminal-gamma-(L-glutamyl)-L-glutamate + ATP = [amino-group carrier protein]-C-terminal-gamma-(5-phospho-L-glutamyl)-L-glutamate + ADP. Its pathway is amino-acid biosynthesis; L-lysine biosynthesis via AAA pathway; L-lysine from L-alpha-aminoadipate (Thermus route): step 2/5. It functions in the pathway amino-acid biosynthesis; L-arginine biosynthesis. Involved in both the arginine and lysine biosynthetic pathways. Phosphorylates the LysW-bound precursors glutamate (for arginine biosynthesis), respectively alpha-aminoadipate (for lysine biosynthesis). The polypeptide is [LysW]-aminoadipate/[LysW]-glutamate kinase (Sulfurisphaera tokodaii (strain DSM 16993 / JCM 10545 / NBRC 100140 / 7) (Sulfolobus tokodaii)).